The primary structure comprises 273 residues: Imidazole glycerol phosphate synthase subunit HisF (273 aa).

Catalysis depends on residues Asp-12 and Asp-136.

The protein belongs to the HisA/HisF family. Heterodimer of HisH and HisF.

It localises to the cytoplasm. The catalysed reaction is 5-[(5-phospho-1-deoxy-D-ribulos-1-ylimino)methylamino]-1-(5-phospho-beta-D-ribosyl)imidazole-4-carboxamide + L-glutamine = D-erythro-1-(imidazol-4-yl)glycerol 3-phosphate + 5-amino-1-(5-phospho-beta-D-ribosyl)imidazole-4-carboxamide + L-glutamate + H(+). It participates in amino-acid biosynthesis; L-histidine biosynthesis; L-histidine from 5-phospho-alpha-D-ribose 1-diphosphate: step 5/9. IGPS catalyzes the conversion of PRFAR and glutamine to IGP, AICAR and glutamate. The HisF subunit catalyzes the cyclization activity that produces IGP and AICAR from PRFAR using the ammonia provided by the HisH subunit. This Halobacterium salinarum (strain ATCC 29341 / DSM 671 / R1) protein is Imidazole glycerol phosphate synthase subunit HisF.